Here is a 147-residue protein sequence, read N- to C-terminus: Cyanate hydratase (147 aa).

Catalysis depends on residues Arg-88, Glu-91, and Ser-114.

The protein belongs to the cyanase family.

It catalyses the reaction cyanate + hydrogencarbonate + 3 H(+) = NH4(+) + 2 CO2. Functionally, catalyzes the reaction of cyanate with bicarbonate to produce ammonia and carbon dioxide. The sequence is that of Cyanate hydratase from Dechloromonas aromatica (strain RCB).